We begin with the raw amino-acid sequence, 131 residues long: Translation initiation factor 5A (131 aa).

Position 36 is a hypusine (K36).

This sequence belongs to the eIF-5A family.

Its subcellular location is the cytoplasm. Its function is as follows. Functions by promoting the formation of the first peptide bond. The sequence is that of Translation initiation factor 5A from Saccharolobus solfataricus (strain ATCC 35092 / DSM 1617 / JCM 11322 / P2) (Sulfolobus solfataricus).